We begin with the raw amino-acid sequence, 172 residues long: Adenine phosphoribosyltransferase (172 aa).

It belongs to the purine/pyrimidine phosphoribosyltransferase family. As to quaternary structure, homodimer.

The protein resides in the cytoplasm. The catalysed reaction is AMP + diphosphate = 5-phospho-alpha-D-ribose 1-diphosphate + adenine. Its pathway is purine metabolism; AMP biosynthesis via salvage pathway; AMP from adenine: step 1/1. In terms of biological role, catalyzes a salvage reaction resulting in the formation of AMP, that is energically less costly than de novo synthesis. This Methanococcus maripaludis (strain C7 / ATCC BAA-1331) protein is Adenine phosphoribosyltransferase.